The sequence spans 686 residues: Putative cuticle collagen 99 (686 aa).

2 disordered regions span residues 42–79 (PPIGNSDDNSDDVAKSRKVRNSCMCPPGPPGERGPVGP) and 163–444 (GPIG…SLVA). The span at 67-79 (PPGPPGERGPVGP) shows a compositional bias: pro residues. Triple-helical region regions lie at residues 142–201 (GMPG…KGDR), 230–263 (GPPGPPGPPGPPGPAGRDGRHGMKGDRGLPGFDG), and 268–296 (GPKGETGNPGRDGIPGARGPPGERGEKGD). The span at 231–243 (PPGPPGPPGPPGP) shows a compositional bias: pro residues. The segment covering 246–256 (RDGRHGMKGDR) has biased composition (basic and acidic residues). Residues 306-318 (GQSVSTVSSSGSQ) are compositionally biased toward low complexity. Composition is skewed to basic and acidic residues over residues 361–373 (EKGERGERGETGD) and 401–417 (RDGRPGEKGEKGEHGLR). The triple-helical region stretch occupies residues 394 to 439 (GPPGPPGRDGRPGEKGEKGEHGLRGDMGLPGPEGTPGKRGRRGRHG). Asparagine 446 and asparagine 535 each carry an N-linked (GlcNAc...) asparagine glycan. The segment at 475–650 (KNVIPGPPGP…TGPDGLPLPY (176 aa)) is disordered. Triple-helical region stretches follow at residues 479–536 (PGPP…SGNQ), 538–576 (GPRGPPGLPGPPGEKGDLGPPGLPGQPGALGLPGHPGPM), and 577–636 (GLRG…PGLD). Residues 540–549 (RGPPGLPGPP) show a composition bias toward pro residues. The span at 563–581 (QPGALGLPGHPGPMGLRGP) shows a compositional bias: low complexity.

It belongs to the cuticular collagen family. In terms of assembly, collagen polypeptide chains are complexed within the cuticle by disulfide bonds and other types of covalent cross-links.

Functionally, nematode cuticles are composed largely of collagen-like proteins. The cuticle functions both as an exoskeleton and as a barrier to protect the worm from its environment. This is Putative cuticle collagen 99 from Caenorhabditis briggsae.